The primary structure comprises 213 residues: Protein arginine N-methyltransferase SFM1 (213 aa).

Phosphoserine is present on residues Ser-204 and Ser-207.

This sequence belongs to the class IV-like SAM-binding methyltransferase superfamily. Protein arginine N-methyltransferase SFM1 family.

It is found in the cytoplasm. Its function is as follows. S-adenosyl-L-methionine-dependent protein-arginine N-methyltransferase that monomethylates ribosomal protein S3 (RPS3) at 'Arg-146'. This is Protein arginine N-methyltransferase SFM1 from Saccharomyces cerevisiae (strain ATCC 204508 / S288c) (Baker's yeast).